Consider the following 553-residue polypeptide: 5'-nucleotidase domain-containing protein 2 (553 aa).

Residues 26–51 (SSSPSCPGCGPPGPGAHCPSTPRSAP) form a disordered region. Aspartate 106 serves as the catalytic Nucleophile. Aspartate 106, aspartate 108, and aspartate 391 together coordinate Mg(2+). Residue aspartate 108 is the Proton donor of the active site.

This sequence belongs to the 5'(3')-deoxyribonucleotidase family. As to quaternary structure, interacts with tyrosine 3-monooxygenase TH; the interaction results in reduced phosphorylation and decreased catalytic activity of TH. In terms of tissue distribution, expressed in eye iridocorneal angle.

The protein resides in the cytoplasm. Promotes dephosphorylation of tyrosine 3-monooxygenase TH which decreases TH catalytic activity and leads to reduced synthesis of catecholamines including dopamine, noradrenaline and adrenaline. The exact mechanism of activity is unknown but may act as a phosphatase or promote the activity of phosphatases or may inhibit phosphorylation by acting as a barrier to interfere with protein kinase access. This chain is 5'-nucleotidase domain-containing protein 2 (Nt5dc2), found in Rattus norvegicus (Rat).